The sequence spans 203 residues: MKLLHIDSSILGDNSASRQLSSQVTKAWQAAEPSAVVTYRDLAADAISHFSSTTLVAAGTTAELRNAAQQHEAELSATTLAEFITADAIVVAAPMYNFTVPTQLKAWIDRIAVAGQTFRYTEAGPEGLCGGKKVVIVSTAGGIHAGQASGVAHEDYLKLVFGFLGITDIEVVRAEGLAYGEEVRNNAMSAAQAKISEQLFAAA.

FMN-binding positions include Ser9, 15–17 (SAS), 95–98 (MYNF), and 139–142 (TAGG).

This sequence belongs to the azoreductase type 1 family. Homodimer. FMN serves as cofactor.

It carries out the reaction 2 a quinone + NADH + H(+) = 2 a 1,4-benzosemiquinone + NAD(+). The catalysed reaction is N,N-dimethyl-1,4-phenylenediamine + anthranilate + 2 NAD(+) = 2-(4-dimethylaminophenyl)diazenylbenzoate + 2 NADH + 2 H(+). In terms of biological role, quinone reductase that provides resistance to thiol-specific stress caused by electrophilic quinones. Its function is as follows. Also exhibits azoreductase activity. Catalyzes the reductive cleavage of the azo bond in aromatic azo compounds to the corresponding amines. The sequence is that of FMN-dependent NADH:quinone oxidoreductase 3 from Pseudomonas fluorescens (strain Pf0-1).